The chain runs to 262 residues: Phosphatidylglycerol--prolipoprotein diacylglyceryl transferase (262 aa).

A run of 4 helical transmembrane segments spans residues 17–37 (LAIHWYGLMYLIGFALVYALG), 57–77 (LIFYSVLGVVLGGRLGYVLFY), 95–115 (GGMSFHGGLIGVIVVMLLFAH), and 119–139 (LGFFTVSDFIAPLIPLGLAAG). Arg140 serves as a coordination point for a 1,2-diacyl-sn-glycero-3-phospho-(1'-sn-glycerol). The next 3 membrane-spanning stretches (helical) occupy residues 173–193 (PSQLYELGLEGIVLFALLWWY), 200–220 (AGQVSAMFLMGYGAFRFLVEF), and 227–247 (FLGLLAAGLSMGQWLSIPMVL).

The protein belongs to the Lgt family.

It is found in the cell inner membrane. It catalyses the reaction L-cysteinyl-[prolipoprotein] + a 1,2-diacyl-sn-glycero-3-phospho-(1'-sn-glycerol) = an S-1,2-diacyl-sn-glyceryl-L-cysteinyl-[prolipoprotein] + sn-glycerol 1-phosphate + H(+). The protein operates within protein modification; lipoprotein biosynthesis (diacylglyceryl transfer). Catalyzes the transfer of the diacylglyceryl group from phosphatidylglycerol to the sulfhydryl group of the N-terminal cysteine of a prolipoprotein, the first step in the formation of mature lipoproteins. The polypeptide is Phosphatidylglycerol--prolipoprotein diacylglyceryl transferase (Bordetella parapertussis (strain 12822 / ATCC BAA-587 / NCTC 13253)).